The sequence spans 244 residues: Phosphoadenosine 5'-phosphosulfate reductase (244 aa).

Cys-239 acts as the Nucleophile; cysteine thiosulfonate intermediate in catalysis.

This sequence belongs to the PAPS reductase family. CysH subfamily.

It localises to the cytoplasm. It catalyses the reaction [thioredoxin]-disulfide + sulfite + adenosine 3',5'-bisphosphate + 2 H(+) = [thioredoxin]-dithiol + 3'-phosphoadenylyl sulfate. Its pathway is sulfur metabolism; hydrogen sulfide biosynthesis; sulfite from sulfate: step 3/3. Catalyzes the formation of sulfite from phosphoadenosine 5'-phosphosulfate (PAPS) using thioredoxin as an electron donor. The polypeptide is Phosphoadenosine 5'-phosphosulfate reductase (Yersinia enterocolitica serotype O:8 / biotype 1B (strain NCTC 13174 / 8081)).